We begin with the raw amino-acid sequence, 192 residues long: dTTP/UTP pyrophosphatase (192 aa).

Residue Asp68 is the Proton acceptor of the active site.

The protein belongs to the Maf family. YhdE subfamily. The cofactor is a divalent metal cation.

It localises to the cytoplasm. The catalysed reaction is dTTP + H2O = dTMP + diphosphate + H(+). It carries out the reaction UTP + H2O = UMP + diphosphate + H(+). Nucleoside triphosphate pyrophosphatase that hydrolyzes dTTP and UTP. May have a dual role in cell division arrest and in preventing the incorporation of modified nucleotides into cellular nucleic acids. This chain is dTTP/UTP pyrophosphatase, found in Cereibacter sphaeroides (strain ATCC 17023 / DSM 158 / JCM 6121 / CCUG 31486 / LMG 2827 / NBRC 12203 / NCIMB 8253 / ATH 2.4.1.) (Rhodobacter sphaeroides).